The primary structure comprises 198 residues: Sulfite reductase, dissimilatory-type subunit alpha (198 aa).

The [4Fe-4S] cluster site is built by cysteine 45, cysteine 64, cysteine 67, and cysteine 70. A 4Fe-4S ferredoxin-type domain is found at 55–83 (GTLSIDNKNCTRCMHCINTMPRALKIGDE).

In terms of assembly, heterohexamer of two alpha, two beta and two gamma subunits.

In terms of biological role, part of the complex that catalyzes the reduction of sulfite to sulfide. The alpha and beta subunits may have arisen by gene duplication. They both bind 2 iron-sulfur clusters, but the alpha subunit seems to be catalytically inactive, due to substitutions along the putative substrate access channel, and because it binds sirohydrochlorin (the dematallated form of siroheme) instead of siroheme. The polypeptide is Sulfite reductase, dissimilatory-type subunit alpha (dsrA) (Megalodesulfovibrio gigas (strain ATCC 19364 / DSM 1382 / NCIMB 9332 / VKM B-1759) (Desulfovibrio gigas)).